We begin with the raw amino-acid sequence, 305 residues long: tRNA pseudouridine synthase B (305 aa).

The Nucleophile role is filled by aspartate 48.

Belongs to the pseudouridine synthase TruB family. Type 1 subfamily.

The catalysed reaction is uridine(55) in tRNA = pseudouridine(55) in tRNA. Responsible for synthesis of pseudouridine from uracil-55 in the psi GC loop of transfer RNAs. This chain is tRNA pseudouridine synthase B, found in Pseudomonas fluorescens (strain ATCC BAA-477 / NRRL B-23932 / Pf-5).